The following is a 213-amino-acid chain: ATP synthase peripheral stalk subunit OSCP, mitochondrial (213 aa).

A mitochondrion-targeting transit peptide spans M1–P23. The SIFI-degron motif lies at A5 to P23. An N6-acetyllysine mark is found at K54, K60, K70, and K73. K90 is subject to N6-succinyllysine. An N6-acetyllysine; alternate mark is found at K158 and K162. N6-succinyllysine; alternate is present on residues K158 and K162. 3 positions are modified to N6-acetyllysine: K172, K176, and K192. K199 is subject to N6-succinyllysine.

The protein belongs to the ATPase delta chain family. As to quaternary structure, component of the ATP synthase complex composed at least of ATP5F1A/subunit alpha, ATP5F1B/subunit beta, ATP5MC1/subunit c (homooctomer), MT-ATP6/subunit a, MT-ATP8/subunit 8, ATP5ME/subunit e, ATP5MF/subunit f, ATP5MG/subunit g, ATP5MK/subunit k, ATP5MJ/subunit j, ATP5F1C/subunit gamma, ATP5F1D/subunit delta, ATP5F1E/subunit epsilon, ATP5PF/subunit F6, ATP5PB/subunit b, ATP5PD/subunit d, ATP5PO/subunit OSCP. ATP synthase complex consists of a soluble F(1) head domain (subunits alpha(3) and beta(3)) - the catalytic core - and a membrane F(0) domain - the membrane proton channel (subunits c, a, 8, e, f, g, k and j). These two domains are linked by a central stalk (subunits gamma, delta, and epsilon) rotating inside the F1 region and a stationary peripheral stalk (subunits F6, b, d, and OSCP). Post-translationally, acetylation at Lys-162 decreases ATP production. Deacetylated by SIRT3. In response to mitochondrial stress, the precursor protein is ubiquitinated by the SIFI complex in the cytoplasm before mitochondrial import, leading to its degradation. Within the SIFI complex, UBR4 initiates ubiquitin chain that are further elongated or branched by KCMF1.

The protein resides in the mitochondrion. Its subcellular location is the mitochondrion inner membrane. Subunit OSCP, of the mitochondrial membrane ATP synthase complex (F(1)F(0) ATP synthase or Complex V) that produces ATP from ADP in the presence of a proton gradient across the membrane which is generated by electron transport complexes of the respiratory chain. ATP synthase complex consist of a soluble F(1) head domain - the catalytic core - and a membrane F(1) domain - the membrane proton channel. These two domains are linked by a central stalk rotating inside the F(1) region and a stationary peripheral stalk. During catalysis, ATP synthesis in the catalytic domain of F(1) is coupled via a rotary mechanism of the central stalk subunits to proton translocation. In vivo, can only synthesize ATP although its ATP hydrolase activity can be activated artificially in vitro. Part of the complex F(0) domain. Part of the complex F(0) domain and the peripheric stalk, which acts as a stator to hold the catalytic alpha(3)beta(3) subcomplex and subunit a/ATP6 static relative to the rotary elements. This is ATP synthase peripheral stalk subunit OSCP, mitochondrial from Homo sapiens (Human).